The primary structure comprises 195 residues: CASP-like protein 1B1 (195 aa).

Topologically, residues 1 to 15 (MAKLALAATSGKSCK) are cytoplasmic. The chain crosses the membrane as a helical span at residues 16-36 (ILLGLRLLAFSATLSAAIVMG). Residues 37-67 (LNKETETFVVGKVGNTPIKATFTAKFDHTPA) lie on the Extracellular side of the membrane. Residues 68-88 (FVFFVVANAMVSFHNLLMIAL) traverse the membrane as a helical segment. Residues 89 to 104 (QIFGGKMEFTGFRLLS) lie on the Cytoplasmic side of the membrane. Residues 105–125 (VAILDMLNVTLISAAANAAAF) traverse the membrane as a helical segment. The Extracellular segment spans residues 126 to 154 (MAEVGKNGNKHARWDKICDRFATYCDHGA). The helical transmembrane segment at 155 to 175 (GALIAAFAGVILMLIISAASI) threads the bilayer. Topologically, residues 176–195 (SRLAQQNKCCSTTASPSVVP) are cytoplasmic.

It belongs to the Casparian strip membrane proteins (CASP) family. Homodimer and heterodimers.

Its subcellular location is the cell membrane. This chain is CASP-like protein 1B1, found in Arabidopsis lyrata subsp. lyrata (Lyre-leaved rock-cress).